A 299-amino-acid chain; its full sequence is Probable lipid kinase YegS-like (299 aa).

In terms of domain architecture, DAGKc spans 2–133 (SRSAGSFLIL…IDIAHVNDKT (132 aa)). Residues Thr-40, 66–72 (GDGTINE), and Thr-95 each bind ATP. The Mg(2+) site is built by Leu-215, Asp-218, and Leu-220. Residue Glu-271 is the Proton acceptor of the active site.

Belongs to the diacylglycerol/lipid kinase family. YegS lipid kinase subfamily. The cofactor is Mg(2+). It depends on Ca(2+) as a cofactor.

Its subcellular location is the cytoplasm. Functionally, probably phosphorylates lipids; the in vivo substrate is unknown. This Cronobacter sakazakii (strain ATCC BAA-894) (Enterobacter sakazakii) protein is Probable lipid kinase YegS-like.